The chain runs to 357 residues: 4-hydroxy-3-methylbut-2-en-1-yl diphosphate synthase (flavodoxin) (357 aa).

[4Fe-4S] cluster contacts are provided by cysteine 264, cysteine 267, cysteine 299, and glutamate 306.

Belongs to the IspG family. It depends on [4Fe-4S] cluster as a cofactor.

The enzyme catalyses (2E)-4-hydroxy-3-methylbut-2-enyl diphosphate + oxidized [flavodoxin] + H2O + 2 H(+) = 2-C-methyl-D-erythritol 2,4-cyclic diphosphate + reduced [flavodoxin]. It participates in isoprenoid biosynthesis; isopentenyl diphosphate biosynthesis via DXP pathway; isopentenyl diphosphate from 1-deoxy-D-xylulose 5-phosphate: step 5/6. Its function is as follows. Converts 2C-methyl-D-erythritol 2,4-cyclodiphosphate (ME-2,4cPP) into 1-hydroxy-2-methyl-2-(E)-butenyl 4-diphosphate. This Campylobacter jejuni subsp. jejuni serotype O:6 (strain 81116 / NCTC 11828) protein is 4-hydroxy-3-methylbut-2-en-1-yl diphosphate synthase (flavodoxin).